The primary structure comprises 234 residues: MKITWLGHSAFRIETGKAKILLDPFLNHNASFAGQDINDVSSGITHILLTHGHGDHVGDTVALAKETGAVVLANADLAAWLGSKGVDRIEMGNTGGTITLGGFSATFTNALHSSAQITEDGVSHALGNANGLMLHFDDEASIFAMGDTDIFSDMGLINELHQPDIGFVPVGDRFTMGGAVAALACQRYFSFKTAIPCHFGTFPIIDQTADKFIDGMEGSKTQVKALKPAESLSI.

The protein belongs to the UPF0173 family.

The sequence is that of UPF0173 metal-dependent hydrolase RHECIAT_CH0001941 from Rhizobium etli (strain CIAT 652).